We begin with the raw amino-acid sequence, 680 residues long: DNA-directed RNA polymerase subunit beta' (680 aa).

Positions 69, 71, 87, and 90 each coordinate Zn(2+). 3 residues coordinate Mg(2+): Asp-489, Asp-491, and Asp-493.

Belongs to the RNA polymerase beta' chain family. RpoC1 subfamily. As to quaternary structure, in plastids the minimal PEP RNA polymerase catalytic core is composed of four subunits: alpha, beta, beta', and beta''. When a (nuclear-encoded) sigma factor is associated with the core the holoenzyme is formed, which can initiate transcription. Mg(2+) serves as cofactor. It depends on Zn(2+) as a cofactor.

It localises to the plastid. The protein localises to the chloroplast. It carries out the reaction RNA(n) + a ribonucleoside 5'-triphosphate = RNA(n+1) + diphosphate. Its function is as follows. DNA-dependent RNA polymerase catalyzes the transcription of DNA into RNA using the four ribonucleoside triphosphates as substrates. In Lobularia maritima (Sweet alyssum), this protein is DNA-directed RNA polymerase subunit beta'.